The chain runs to 160 residues: Ribosomal RNA large subunit methyltransferase H (160 aa).

Residues L78, G109, and 128-133 (LSNLTL) contribute to the S-adenosyl-L-methionine site.

It belongs to the RNA methyltransferase RlmH family. Homodimer.

The protein resides in the cytoplasm. It carries out the reaction pseudouridine(1915) in 23S rRNA + S-adenosyl-L-methionine = N(3)-methylpseudouridine(1915) in 23S rRNA + S-adenosyl-L-homocysteine + H(+). Its function is as follows. Specifically methylates the pseudouridine at position 1915 (m3Psi1915) in 23S rRNA. The sequence is that of Ribosomal RNA large subunit methyltransferase H from Alcanivorax borkumensis (strain ATCC 700651 / DSM 11573 / NCIMB 13689 / SK2).